A 640-amino-acid chain; its full sequence is 1-deoxy-D-xylulose-5-phosphate synthase (640 aa).

Residues His-79 and 120 to 122 (AHS) contribute to the thiamine diphosphate site. Asp-151 contacts Mg(2+). Residues 152 to 153 (GA), Asn-180, Tyr-289, and Glu-371 each bind thiamine diphosphate. Asn-180 provides a ligand contact to Mg(2+).

This sequence belongs to the transketolase family. DXPS subfamily. Homodimer. Requires Mg(2+) as cofactor. The cofactor is thiamine diphosphate.

It carries out the reaction D-glyceraldehyde 3-phosphate + pyruvate + H(+) = 1-deoxy-D-xylulose 5-phosphate + CO2. It functions in the pathway metabolic intermediate biosynthesis; 1-deoxy-D-xylulose 5-phosphate biosynthesis; 1-deoxy-D-xylulose 5-phosphate from D-glyceraldehyde 3-phosphate and pyruvate: step 1/1. Catalyzes the acyloin condensation reaction between C atoms 2 and 3 of pyruvate and glyceraldehyde 3-phosphate to yield 1-deoxy-D-xylulose-5-phosphate (DXP). The protein is 1-deoxy-D-xylulose-5-phosphate synthase of Novosphingobium aromaticivorans (strain ATCC 700278 / DSM 12444 / CCUG 56034 / CIP 105152 / NBRC 16084 / F199).